Consider the following 330-residue polypeptide: Serine/threonine-protein phosphatase PP1-alpha catalytic subunit (330 aa).

Residue S2 is modified to N-acetylserine. Residues S2 and S22 each carry the phosphoserine modification. Mn(2+) contacts are provided by D64, H66, D92, and N124. H125 acts as the Proton donor in catalysis. 2 residues coordinate Mn(2+): H173 and H248. K305 is subject to N6-acetyllysine. Phosphotyrosine is present on Y306. The tract at residues 306-330 (YGQFSGLNPGGRPITPPRNSAKAKK) is disordered. At T320 the chain carries Phosphothreonine. Phosphoserine is present on S325.

Belongs to the PPP phosphatase family. PP-1 subfamily. As to quaternary structure, PP1 comprises a catalytic subunit, PPP1CA, PPP1CB or PPP1CC, which is folded into its native form by inhibitor 2 and glycogen synthetase kinase 3, and then complexed to one or several targeting or regulatory subunits. PPP1R12A, PPP1R12B and PPP1R12C mediate binding to myosin. PPP1R3A (in skeletal muscle), PPP1R3B (in liver), PPP1R3C, PPP1R3D and PPP1R3F (in brain) mediate binding to glycogen. Interacts with PPP1R39. Interacts with BTBD10. Interacts with KCTD20. Interacts with PPP1R9A and PPP1R9B. Part of a complex containing PPP1R15B, PP1 and NCK1/2. Interacts with PHACTR4; which acts as an activator of PP1 activity. Interacts with PPP1R15A and PPP1R15B; the interactions mediate binding to EIF2S1. Interacts with PPP1R7. Interacts with YLPM1. Forms a complex with ILF2, ILF3, YLPM1, KHDRBS1, RBMX and NCOA5. Interacts with NOM1 and PPP1R8. Interacts with PPP1R16B. Interacts with RPSA only in the presence of PPP1R16B. Component of the PNUTS-PP1 phosphatase complex, composed of PPP1R10/PNUTS, TOX4, WDR82, and PPP1CA or PPP1CB or PPP1CC. Interacts with PPP1R10/PNUTS and PPP1R8. Interacts with WDR82 in the presence of PPP1R10/PNUTS. Interacts with TRIM28; the interaction dephosphorylates TRIM28 on 'Ser-824' and forms a complex at the p21 promoter site. Interacts with isoform 1 and isoform 4 of NEK2. Interacts with FER; this promotes phosphorylation at Thr-320. Interacts with DAB2; the interaction is mutually exclusive with the AXIN1:PPP1CA interaction. Interacts with FOXP3. Interacts with CENPA. Interacts with ATG16L1. Found in a complex with PPP1CA, PPP1CC, SHC1 and PEAK1. Interacts with tensin TNS1. Interacts with SAXO4, PPP1R21, PPP1R26, PPP1R27, PPP1R35, PPP1R36, PPP1R37, SH3RF2, ELFN1 and ELFN2. Interacts with TPRN; the interaction results in inhibition of PPC1A phosphatase activity. Interacts with SKA1 (via C-terminus); the interaction is direct and required for the recruitment of PP1 to the kinetochore. Interacts with the KNL1 complex subunit KNL1; the interaction is direct and mutually exclusive with KNL1 binding to microtubules. Component of the SHOC2-MRAS-PP1c (SMP) complex consisting of SHOC2, GTP-bound M-Ras/MRAS and the catalytic subunit of protein phosphatase 1 (either PPP1CA, PPP1CB or PPP1CC). SHOC2 and PP1c preferably bind M-Ras/MRAS, but they also bind K-Ras/KRAS, N-Ras/NRAS and H-Ras/HRAS; these interactions are GTP-dependent and both SHOC2 and PP1c are required to form a stable complex. Interacts with SHOC2 in the absence of Ras GTPases. (Microbial infection) Interacts with HHV-1 ICP34.5. In terms of assembly, (Microbial infection) Interacts with Venezuelan equine encephalitis virus (VEEV) capsid protein; this interaction dephosphorylates the capsid protein, which increases its ability to bind to the viral genome. Requires Fe cation as cofactor. Mn(2+) serves as cofactor. Post-translationally, phosphorylated. Dephosphorylated at Thr-320 in the presence of ionizing radiation.

The protein localises to the cytoplasm. The protein resides in the nucleus. Its subcellular location is the nucleoplasm. It is found in the nucleolus. The enzyme catalyses O-phospho-L-seryl-[protein] + H2O = L-seryl-[protein] + phosphate. It catalyses the reaction O-phospho-L-threonyl-[protein] + H2O = L-threonyl-[protein] + phosphate. With respect to regulation, the phosphatase activity of the PPP1R15A-PP1 complex toward EIF2S1 is specifically inhibited by Salubrinal, a drug that protects cells from endoplasmic reticulum stress. Protein phosphatase that associates with over 200 regulatory proteins to form highly specific holoenzymes which dephosphorylate hundreds of biological targets. Protein phosphatase 1 (PP1) is essential for cell division, transcription elongation, and participates in the regulation of glycogen metabolism, muscle contractility and protein synthesis. Involved in regulation of ionic conductances and long-term synaptic plasticity. May play an important role in dephosphorylating substrates such as the postsynaptic density-associated Ca(2+)/calmodulin dependent protein kinase II. Catalytic component of the PNUTS-PP1 protein phosphatase complex, a protein phosphatase 1 (PP1) complex that promotes RNA polymerase II transcription pause-release, allowing transcription elongation: the PNUTS-PP1 complex mediates the release of RNA polymerase II from promoter-proximal region of genes by catalyzing dephosphorylation of proteins involved in transcription, such as AFF4, CDK9, MEPCE, INTS12, NCBP1, POLR2M/GDOWN1 and SUPT6H. The PNUTS-PP1 complex also regulates transcription termination by mediating dephosphorylation of SUPT5H in termination zones downstream of poly(A) sites, thereby promoting deceleration of RNA polymerase II transcription. PNUTS-PP1 complex is also involved in the response to replication stress by mediating dephosphorylation of POLR2A at 'Ser-5' of the CTD, promoting RNA polymerase II degradation. PNUTS-PP1 also plays a role in the control of chromatin structure and cell cycle progression during the transition from mitosis into interphase. Regulates NEK2 function in terms of kinase activity and centrosome number and splitting, both in the presence and absence of radiation-induced DNA damage. Regulator of neural tube and optic fissure closure, and enteric neural crest cell (ENCCs) migration during development. In balance with CSNK1D and CSNK1E, determines the circadian period length, through the regulation of the speed and rhythmicity of PER1 and PER2 phosphorylation. May dephosphorylate CSNK1D and CSNK1E. Dephosphorylates the 'Ser-418' residue of FOXP3 in regulatory T-cells (Treg) from patients with rheumatoid arthritis, thereby inactivating FOXP3 and rendering Treg cells functionally defective. Dephosphorylates CENPA. Dephosphorylates the 'Ser-139' residue of ATG16L1 causing dissociation of ATG12-ATG5-ATG16L1 complex, thereby inhibiting autophagy. Together with PPP1CC (PP1-gamma subunit), dephosphorylates IFIH1/MDA5 and RIG-I leading to their activation and a functional innate immune response. Core component of the SHOC2-MRAS-PP1c (SMP) holophosphatase complex that regulates the MAPK pathway activation. The SMP complex specifically dephosphorylates the inhibitory phosphorylation at 'Ser-259' of RAF1 kinase, 'Ser-365' of BRAF kinase and 'Ser-214' of ARAF kinase, stimulating their kinase activities. The SMP complex enhances the dephosphorylation activity and substrate specificity of PP1c. Its function is as follows. (Microbial infection) Necessary for alphaviruses replication. The chain is Serine/threonine-protein phosphatase PP1-alpha catalytic subunit (PPP1CA) from Homo sapiens (Human).